The following is a 203-amino-acid chain: Inosine triphosphate pyrophosphatase (203 aa).

Residue 10-15 (TGNQNK) coordinates ITP. A Mg(2+)-binding site is contributed by Glu-40. ITP is bound by residues Lys-52, 68–69 (DT), Lys-85, 145–148 (FGWD), Lys-168, and 173–174 (HR).

Belongs to the HAM1 NTPase family. Homodimer. It depends on Mg(2+) as a cofactor. Mn(2+) is required as a cofactor.

The protein localises to the cytoplasm. The enzyme catalyses ITP + H2O = IMP + diphosphate + H(+). The catalysed reaction is dITP + H2O = dIMP + diphosphate + H(+). It catalyses the reaction XTP + H2O = XMP + diphosphate + H(+). Pyrophosphatase that hydrolyzes non-canonical purine nucleotides such as inosine triphosphate (ITP), deoxyinosine triphosphate (dITP) or xanthosine 5'-triphosphate (XTP) to their respective monophosphate derivatives. The enzyme does not distinguish between the deoxy- and ribose forms. Probably excludes non-canonical purines from RNA and DNA precursor pools, thus preventing their incorporation into RNA and DNA and avoiding chromosomal lesions. The chain is Inosine triphosphate pyrophosphatase from Nematostella vectensis (Starlet sea anemone).